The sequence spans 276 residues: NAD(+)--dinitrogen-reductase ADP-D-ribosyltransferase (276 aa).

Monomer.

The catalysed reaction is L-arginyl-[dinitrogen reductase] + NAD(+) = N(omega)-alpha-(ADP-D-ribosyl)-L-arginyl-[dinitrogen reductase] + nicotinamide + H(+). Functionally, involved in the regulation of the nitrogen fixation activity by the reversible ADP-ribosylation of the dinitrogenase reductase component of the nitrogenase enzyme complex. The ADP-ribosyltransferase (DraT) transfers the ADP-ribose group from NAD to dinitrogenase reductase. The ADP-ribose group is removed through the action of the ADP-ribosylglycohydrolase (DraG). This is NAD(+)--dinitrogen-reductase ADP-D-ribosyltransferase (draT) from Rhodospirillum rubrum.